The sequence spans 273 residues: 4-hydroxy-tetrahydrodipicolinate reductase (273 aa).

NAD(+) is bound by residues 12–17 (GAGGRM) and Glu-38. Arg-39 is a binding site for NADP(+). NAD(+) contacts are provided by residues 102–104 (GTT) and 126–129 (AANF). His-159 functions as the Proton donor/acceptor in the catalytic mechanism. His-160 is a (S)-2,3,4,5-tetrahydrodipicolinate binding site. Lys-163 acts as the Proton donor in catalysis. Residue 169 to 170 (GT) coordinates (S)-2,3,4,5-tetrahydrodipicolinate.

The protein belongs to the DapB family. As to quaternary structure, homotetramer.

The protein localises to the cytoplasm. The enzyme catalyses (S)-2,3,4,5-tetrahydrodipicolinate + NAD(+) + H2O = (2S,4S)-4-hydroxy-2,3,4,5-tetrahydrodipicolinate + NADH + H(+). The catalysed reaction is (S)-2,3,4,5-tetrahydrodipicolinate + NADP(+) + H2O = (2S,4S)-4-hydroxy-2,3,4,5-tetrahydrodipicolinate + NADPH + H(+). Its pathway is amino-acid biosynthesis; L-lysine biosynthesis via DAP pathway; (S)-tetrahydrodipicolinate from L-aspartate: step 4/4. Its function is as follows. Catalyzes the conversion of 4-hydroxy-tetrahydrodipicolinate (HTPA) to tetrahydrodipicolinate. This chain is 4-hydroxy-tetrahydrodipicolinate reductase, found in Salmonella enteritidis PT4 (strain P125109).